The following is a 367-amino-acid chain: Putative 12-oxophytodienoate reductase 11 (367 aa).

FMN is bound by residues 26–28, Ala-59, and Gln-101; that span reads PLT. Position 178 to 181 (178 to 181) interacts with substrate; the sequence is HGAH. The Proton donor role is filled by Tyr-183. Arg-230 contributes to the FMN binding site. Residue Arg-270 participates in substrate binding. Residues Gly-300 and 321-322 each bind FMN; that span reads GR.

The protein belongs to the NADH:flavin oxidoreductase/NADH oxidase family. The cofactor is FMN.

Putative oxophytodienoate reductase that may be involved in the biosynthesis or metabolism of oxylipin signaling molecules. The protein is Putative 12-oxophytodienoate reductase 11 (OPR11) of Oryza sativa subsp. japonica (Rice).